A 140-amino-acid polypeptide reads, in one-letter code: Ubiquitin-like protein ATG12 (140 aa).

Positions 1 to 50 are disordered; it reads MAEEPQSVLQLPTSIAAGGEGLTDVSPETTTPEPPSSAAVSPGTEEPAGD. Residues 25–42 are compositionally biased toward low complexity; sequence VSPETTTPEPPSSAAVSP. A Glycyl lysine isopeptide (Gly-Lys) (interchain with K-130 in ATG5) cross-link involves residue G140.

It belongs to the ATG12 family. In terms of assembly, forms a conjugate with ATG5. Part of the minor complex composed of 4 sets of ATG12-ATG5 and ATG16L1 (400 kDa); this complex interacts with ATG3 leading to disruption of ATG7 interaction and promotion of ATG8-like proteins lipidation. Forms an 800-kDa complex composed of ATG12-ATG5 and ATG16L2. Interacts with DHX58/RIG-1, IFIH1/MDA5 and MAVS/IPS-1 in monomeric form as well as in ATG12-ATG5 conjugate. The interaction with MAVS is further enhanced upon vesicular stomatitis virus (VSV) infection. Interacts with ATG3; this interaction is essential for phosphatidylethanolamine (PE)-conjugated ATG8-like proteins formation. Interacts with ATG7. Interacts with ATG10. The ATG12-ATG5 conjugate interacts with RAB33A; this interaction is bridged by ATG16L1 and promotes ATG12-ATG5-ATG16L1 complex recruitment to phagophores. Interacts with TECPR1. Interacts with SH3BGRL. The ATG12-ATG5 conjugate interacts with PDCD6IP (via the BRO1 domain); this interaction is bridged by ATG12 and promotes multiple PDCD6IP-mediated functions such as endolysosomal trafficking, macroautophagy and exosome biogenesis. Acetylated by EP300. As to expression, ubiquitous.

The protein localises to the cytoplasm. It localises to the preautophagosomal structure membrane. In terms of biological role, ubiquitin-like protein involved in autophagy vesicles formation. Conjugation with ATG5 through a ubiquitin-like conjugating system involving also ATG7 as an E1-like activating enzyme and ATG10 as an E2-like conjugating enzyme, is essential for its function. The ATG12-ATG5 conjugate acts as an E3-like enzyme which is required for lipidation of ATG8 family proteins and their association to the vesicle membranes. As part of the ATG8 conjugation system with ATG5 and ATG16L1, required for recruitment of LRRK2 to stressed lysosomes and induction of LRRK2 kinase activity in response to lysosomal stress. Its function is as follows. (Microbial infection) May act as a proviral factor. In association with ATG5, negatively regulates the innate antiviral immune response by impairing the type I IFN production pathway upon vesicular stomatitis virus (VSV) infection. Required for the translation of incoming hepatitis C virus (HCV) RNA and, thereby, for the initiation of HCV replication, but not required once infection is established. In Homo sapiens (Human), this protein is Ubiquitin-like protein ATG12.